A 219-amino-acid chain; its full sequence is Probable transaldolase (219 aa).

The Schiff-base intermediate with substrate role is filled by K83.

The protein belongs to the transaldolase family. Type 3B subfamily.

It is found in the cytoplasm. It carries out the reaction D-sedoheptulose 7-phosphate + D-glyceraldehyde 3-phosphate = D-erythrose 4-phosphate + beta-D-fructose 6-phosphate. It functions in the pathway carbohydrate degradation; pentose phosphate pathway; D-glyceraldehyde 3-phosphate and beta-D-fructose 6-phosphate from D-ribose 5-phosphate and D-xylulose 5-phosphate (non-oxidative stage): step 2/3. Transaldolase is important for the balance of metabolites in the pentose-phosphate pathway. The sequence is that of Probable transaldolase from Cereibacter sphaeroides (strain ATCC 17029 / ATH 2.4.9) (Rhodobacter sphaeroides).